The chain runs to 694 residues: Rabphilin-3A (694 aa).

The segment covering 1-12 (MTDTVFSNSSNR) has biased composition (polar residues). Residues 1 to 51 (MTDTVFSNSSNRWMYPSDRPLQSNDKEQLQAGWSVHPGGQPDRQRKQEELT) are disordered. Positions 44-160 (QRKQEELTDE…KRSGAWFFKG (117 aa)) constitute a RabBD domain. The FYVE-type zinc finger occupies 92 to 148 (GDGVNRCILCGEQLGMLGSACVVCEDCKKNVCTKCGVETNNRLHSVWLCKICIEQRE). Cysteine 98, cysteine 101, cysteine 115, cysteine 118, cysteine 123, cysteine 126, cysteine 140, and cysteine 143 together coordinate Zn(2+). A disordered region spans residues 166-388 (LPQPMPIKKT…EEEANSYDSD (223 aa)). Over residues 177–186 (PQQPVSEPAA) the composition is skewed to low complexity. The span at 202-211 (ARGDSEDRRG) shows a compositional bias: basic and acidic residues. The residue at position 226 (arginine 226) is an Omega-N-methylarginine. The residue at position 272 (serine 272) is a Phosphoserine. The span at 352 to 370 (PSGPYSQASAAAPQPAAAR) shows a compositional bias: low complexity. The span at 375-388 (PEEEEEEANSYDSD) shows a compositional bias: acidic residues. The C2 1 domain occupies 392-514 (TLGALEFSLL…KPNQRKNFNI (123 aa)). Positions 422, 423, 429, 484, 485, 486, 492, 539, 581, 587, 641, 642, 643, and 649 each coordinate Ca(2+). Residues 550–683 (ERGKILVSLM…NKDKKIERWH (134 aa)) enclose the C2 2 domain. Phosphoserine occurs at positions 692 and 693.

In terms of assembly, interacts with RAB3B, RAB3C, RAB3D, RAB8A, RAB27A and RAB27B. Interacts with RAB3A; this interaction recruits RPH3A to synaptic vesicules. Interacts (via C2B domain) with SNAP25. Interacts with deubiquitinating enzyme CAND1; this interaction results in the deubiquitination of RPH3A. Interacts with GRIN2A and DLG4; this ternary complex regulates NMDA receptor composition at postsynaptic membranes. Interacts with SNCA. Ca(2+) is required as a cofactor. Post-translationally, ubiquitinated. Deubiquitinated by CAND1 to prevent its degradation.

It localises to the cytoplasmic vesicle. Its subcellular location is the secretory vesicle. It is found in the synaptic vesicle membrane. The protein resides in the cell projection. The protein localises to the dendritic spine. It localises to the postsynaptic cell membrane. Its subcellular location is the membrane. In terms of biological role, plays an essential role in docking and fusion steps of regulated exocytosis. At the presynaptic level, RPH3A is recruited by RAB3A to the synaptic vesicle membrane in a GTP-dependent manner where it modulates synaptic vesicle trafficking and calcium-triggered neurotransmitter release. In the post-synaptic compartment, forms a ternary complex with GRIN2A and DLG4 and regulates NMDA receptor stability. Also plays a role in the exocytosis of arginine vasopressin hormone. This Homo sapiens (Human) protein is Rabphilin-3A (RPH3A).